The sequence spans 163 residues: Cyclic pyranopterin monophosphate synthase (163 aa).

Substrate is bound by residues 78-80 (LCH) and 116-117 (ME). Residue D131 is part of the active site.

The protein belongs to the MoaC family. In terms of assembly, homohexamer; trimer of dimers.

It carries out the reaction (8S)-3',8-cyclo-7,8-dihydroguanosine 5'-triphosphate = cyclic pyranopterin phosphate + diphosphate. It participates in cofactor biosynthesis; molybdopterin biosynthesis. In terms of biological role, catalyzes the conversion of (8S)-3',8-cyclo-7,8-dihydroguanosine 5'-triphosphate to cyclic pyranopterin monophosphate (cPMP). The chain is Cyclic pyranopterin monophosphate synthase from Agrobacterium fabrum (strain C58 / ATCC 33970) (Agrobacterium tumefaciens (strain C58)).